Consider the following 282-residue polypeptide: MTSADYASRQRAIIAELNVAPHFDAEAEIDRRIDFLAQYLRSTGLRTYVLGISGGVDSSTAGRLAQLSVERLRADGYDARFIAMRLPNGVQNDEEDAQRALAFVRADEVLTVDVKPAADAMLRSLVASGHAFDTPAQQDFVHGNIKARERMIAQYAVAGARRGIVIGTDHAAESLMGFFTKFGDGGADILPLAGLNKRRVRGVARALGGEELIVMKVPTADLEELRPLRPDEHAYGVTYDEIDDFLEGKPVADRVYETVLRFYDGSRHKRALPYTMFDWPAA.

51–58 (GISGGVDS) contacts ATP. Asp-57 serves as a coordination point for Mg(2+). Arg-148 contributes to the deamido-NAD(+) binding site. Thr-168 contributes to the ATP binding site. Residue Glu-173 participates in Mg(2+) binding. 2 residues coordinate deamido-NAD(+): Lys-181 and Asp-188. The ATP site is built by Lys-197 and Thr-219. A deamido-NAD(+)-binding site is contributed by 268 to 269 (HK).

The protein belongs to the NAD synthetase family. As to quaternary structure, homodimer.

The catalysed reaction is deamido-NAD(+) + NH4(+) + ATP = AMP + diphosphate + NAD(+) + H(+). It functions in the pathway cofactor biosynthesis; NAD(+) biosynthesis; NAD(+) from deamido-NAD(+) (ammonia route): step 1/1. Functionally, catalyzes the ATP-dependent amidation of deamido-NAD to form NAD. Uses ammonia as a nitrogen source. The polypeptide is NH(3)-dependent NAD(+) synthetase (Burkholderia cenocepacia (strain ATCC BAA-245 / DSM 16553 / LMG 16656 / NCTC 13227 / J2315 / CF5610) (Burkholderia cepacia (strain J2315))).